Here is a 167-residue protein sequence, read N- to C-terminus: Osteocalcin 2a (167 aa).

The first 18 residues, 1–18, serve as a signal peptide directing secretion; the sequence is MKSLTLLTICAVLSVSLS. Positions 19–118 are excised as a propeptide; it reads MNDLALDVVL…LASVLLRRKR (100 aa). The segment at 28–99 is disordered; sequence LDPAPDPATE…TTEDPAAATE (72 aa). The segment covering 38 to 87 has biased composition (low complexity); it reads PAPAADSSASSSASSSSSSASDSSASASDSSDSDSSSASSSSSSSESASA. The region spanning 131–163 is the Gla domain; it reads QVESLSEVCELNLACEHMAETAGIVAAYTAYYG. Positions 133, 137, and 140 each coordinate Ca(2+). A 4-carboxyglutamate mark is found at Glu-133, Glu-137, and Glu-140. Cys-139 and Cys-145 are disulfide-bonded.

The protein belongs to the osteocalcin/matrix Gla protein family. Post-translationally, gamma-carboxyglutamate residues are formed by vitamin K dependent carboxylation. These residues are essential for the binding of calcium.

It localises to the secreted. Its function is as follows. Binds strongly to apatite and calcium. In Oncorhynchus mykiss (Rainbow trout), this protein is Osteocalcin 2a.